Reading from the N-terminus, the 854-residue chain is DNA mismatch repair protein MutS (854 aa).

Residue 615 to 622 (GPNMGGKS) coordinates ATP.

It belongs to the DNA mismatch repair MutS family.

Functionally, this protein is involved in the repair of mismatches in DNA. It is possible that it carries out the mismatch recognition step. This protein has a weak ATPase activity. The protein is DNA mismatch repair protein MutS of Aliivibrio fischeri (strain MJ11) (Vibrio fischeri).